The chain runs to 391 residues: Tryptophan synthase beta chain (391 aa).

The residue at position 84 (K84) is an N6-(pyridoxal phosphate)lysine.

The protein belongs to the TrpB family. Tetramer of two alpha and two beta chains. Pyridoxal 5'-phosphate serves as cofactor.

The catalysed reaction is (1S,2R)-1-C-(indol-3-yl)glycerol 3-phosphate + L-serine = D-glyceraldehyde 3-phosphate + L-tryptophan + H2O. Its pathway is amino-acid biosynthesis; L-tryptophan biosynthesis; L-tryptophan from chorismate: step 5/5. Its function is as follows. The beta subunit is responsible for the synthesis of L-tryptophan from indole and L-serine. The polypeptide is Tryptophan synthase beta chain (Caldanaerobacter subterraneus subsp. tengcongensis (strain DSM 15242 / JCM 11007 / NBRC 100824 / MB4) (Thermoanaerobacter tengcongensis)).